Here is an 853-residue protein sequence, read N- to C-terminus: Dynamin-A (853 aa).

The 275-residue stretch at 22–296 folds into the Dynamin-type G domain; the sequence is PLDLPQIVVV…LMFHIRDTLP (275 aa). The segment at 32–39 is G1 motif; that stretch reads GSQSSGKS. 32–40 lines the GTP pocket; the sequence is GSQSSGKSS. The segment at 58-60 is G2 motif; the sequence is VTR. The tract at residues 138-141 is G3 motif; that stretch reads DLPG. A G4 motif region spans residues 207–210; sequence TKLD. GTP contacts are provided by residues 207-213 and 238-241; these read TKLDLMD and NRSQ. The tract at residues 237–240 is G5 motif; it reads INRS. Composition is skewed to low complexity over residues 523–569 and 590–607; these read DQYQ…QQNQ and PAQQ…KGPQ. Positions 523–738 are disordered; sequence DQYQQQQQQQ…RYQDDFYGRG (216 aa). The segment covering 610–624 has biased composition (polar residues); the sequence is PPNQSKPSSIPQNGP. Low complexity-rich tracts occupy residues 625–635 and 664–728; these read NNNNNNNNNNN and NNSN…SSYN. The GED domain occupies 762 to 853; sequence TELIRELLIS…IINEIRDFRN (92 aa).

This sequence belongs to the TRAFAC class dynamin-like GTPase superfamily. Dynamin/Fzo/YdjA family.

Its subcellular location is the cytoplasm. In terms of biological role, function in membrane trafficking processes along the endo-lysosomal pathway. This chain is Dynamin-A (dymA), found in Dictyostelium discoideum (Social amoeba).